Reading from the N-terminus, the 376-residue chain is Succinyl-diaminopimelate desuccinylase (376 aa).

Residue His-67 coordinates Zn(2+). Asp-69 is a catalytic residue. Asp-100 is a Zn(2+) binding site. Catalysis depends on Glu-134, which acts as the Proton acceptor. Zn(2+) contacts are provided by Glu-135, Glu-163, and His-349.

The protein belongs to the peptidase M20A family. DapE subfamily. Homodimer. Zn(2+) is required as a cofactor. Co(2+) serves as cofactor.

The catalysed reaction is N-succinyl-(2S,6S)-2,6-diaminopimelate + H2O = (2S,6S)-2,6-diaminopimelate + succinate. The protein operates within amino-acid biosynthesis; L-lysine biosynthesis via DAP pathway; LL-2,6-diaminopimelate from (S)-tetrahydrodipicolinate (succinylase route): step 3/3. In terms of biological role, catalyzes the hydrolysis of N-succinyl-L,L-diaminopimelic acid (SDAP), forming succinate and LL-2,6-diaminopimelate (DAP), an intermediate involved in the bacterial biosynthesis of lysine and meso-diaminopimelic acid, an essential component of bacterial cell walls. The sequence is that of Succinyl-diaminopimelate desuccinylase from Actinobacillus succinogenes (strain ATCC 55618 / DSM 22257 / CCUG 43843 / 130Z).